We begin with the raw amino-acid sequence, 199 residues long: Recombination protein RecR (199 aa).

Residues cysteine 58–cysteine 73 form a C4-type zinc finger. Positions glycine 81–proline 175 constitute a Toprim domain.

Belongs to the RecR family.

May play a role in DNA repair. It seems to be involved in an RecBC-independent recombinational process of DNA repair. It may act with RecF and RecO. This chain is Recombination protein RecR, found in Synechococcus sp. (strain WH7803).